A 495-amino-acid chain; its full sequence is Cobyric acid synthase (495 aa).

The region spanning 250–444 (SLKISILRLP…LHGLFDNGAW (195 aa)) is the GATase cobBQ-type domain. C331 functions as the Nucleophile in the catalytic mechanism. H436 is a catalytic residue.

The protein belongs to the CobB/CobQ family. CobQ subfamily.

It functions in the pathway cofactor biosynthesis; adenosylcobalamin biosynthesis. In terms of biological role, catalyzes amidations at positions B, D, E, and G on adenosylcobyrinic A,C-diamide. NH(2) groups are provided by glutamine, and one molecule of ATP is hydrogenolyzed for each amidation. The polypeptide is Cobyric acid synthase (Rippkaea orientalis (strain PCC 8801 / RF-1) (Cyanothece sp. (strain PCC 8801))).